The chain runs to 500 residues: Protein nucleotidyltransferase YdiU (500 aa).

ATP contacts are provided by Gly-96, Gly-98, Arg-99, Lys-119, Asp-131, Gly-132, Arg-182, and Arg-189. The active-site Proton acceptor is the Asp-258. The Mg(2+) site is built by Asn-259 and Asp-268. Asp-268 is a binding site for ATP.

Belongs to the SELO family. Mg(2+) serves as cofactor. It depends on Mn(2+) as a cofactor.

The catalysed reaction is L-seryl-[protein] + ATP = 3-O-(5'-adenylyl)-L-seryl-[protein] + diphosphate. The enzyme catalyses L-threonyl-[protein] + ATP = 3-O-(5'-adenylyl)-L-threonyl-[protein] + diphosphate. It catalyses the reaction L-tyrosyl-[protein] + ATP = O-(5'-adenylyl)-L-tyrosyl-[protein] + diphosphate. It carries out the reaction L-histidyl-[protein] + UTP = N(tele)-(5'-uridylyl)-L-histidyl-[protein] + diphosphate. The catalysed reaction is L-seryl-[protein] + UTP = O-(5'-uridylyl)-L-seryl-[protein] + diphosphate. The enzyme catalyses L-tyrosyl-[protein] + UTP = O-(5'-uridylyl)-L-tyrosyl-[protein] + diphosphate. Its function is as follows. Nucleotidyltransferase involved in the post-translational modification of proteins. It can catalyze the addition of adenosine monophosphate (AMP) or uridine monophosphate (UMP) to a protein, resulting in modifications known as AMPylation and UMPylation. This is Protein nucleotidyltransferase YdiU from Rhizobium johnstonii (strain DSM 114642 / LMG 32736 / 3841) (Rhizobium leguminosarum bv. viciae).